Here is a 330-residue protein sequence, read N- to C-terminus: GTPase Obg (330 aa).

The Obg domain occupies 1–159 (MNFIDEVKIC…MWIHLSLKLL (159 aa)). The region spanning 160-327 (SDVGLVGLPN…IVKLALKTIK (168 aa)) is the OBG-type G domain. GTP contacts are provided by residues 166 to 173 (GLPNAGKS), 191 to 195 (FTTLV), 212 to 215 (DIPG), 279 to 282 (NKCD), and 308 to 310 (STY). Mg(2+) contacts are provided by serine 173 and threonine 193.

The protein belongs to the TRAFAC class OBG-HflX-like GTPase superfamily. OBG GTPase family. Monomer. The cofactor is Mg(2+).

Its subcellular location is the cytoplasm. Its function is as follows. An essential GTPase which binds GTP, GDP and possibly (p)ppGpp with moderate affinity, with high nucleotide exchange rates and a fairly low GTP hydrolysis rate. Plays a role in control of the cell cycle, stress response, ribosome biogenesis and in those bacteria that undergo differentiation, in morphogenesis control. The protein is GTPase Obg of Rickettsia felis (strain ATCC VR-1525 / URRWXCal2) (Rickettsia azadi).